The following is an 867-amino-acid chain: DNA replication licensing factor mcm6 (867 aa).

Residues 51–76 (IDKNNNNNNNEDNEDNNENENEYDEN) are disordered. Positions 61 to 75 (EDNEDNNENENEYDE) are enriched in acidic residues. The MCM domain maps to 420 to 626 (IYQNLVNSIC…ESDHRIAEHI (207 aa)). Ser-473, Thr-474, Lys-476, Ser-477, and Asn-578 together coordinate ATP. The Arginine finger signature appears at 602–605 (SRFD). Residues Arg-693 and Glu-696 each coordinate ADP.

Belongs to the MCM family. As to quaternary structure, component of the MCM2-7 complex. The complex forms a toroidal hexameric ring with the proposed subunit order MCM2-MCM6-MCM4-MCM7-MCM3-MCM5 (By simililarity).

It is found in the nucleus. It carries out the reaction ATP + H2O = ADP + phosphate + H(+). Acts as a component of the MCM2-7 complex (MCM complex) which is the replicative helicase essential for 'once per cell cycle' DNA replication initiation and elongation in eukaryotic cells. Core component of CDC45-MCM-GINS (CMG) helicase, the molecular machine that unwinds template DNA during replication, and around which the replisome is built. The active ATPase sites in the MCM2-7 ring are formed through the interaction surfaces of two neighboring subunits such that a critical structure of a conserved arginine finger motif is provided in trans relative to the ATP-binding site of the Walker A box of the adjacent subunit. The six ATPase active sites, however, are likely to contribute differentially to the complex helicase activity. The protein is DNA replication licensing factor mcm6 (mcm6) of Dictyostelium discoideum (Social amoeba).